The chain runs to 432 residues: Phosphoribosylamine--glycine ligase (432 aa).

One can recognise an ATP-grasp domain in the interval 110-316 (RNFMKDNDIE…MIDVMSAVVN (207 aa)). 137 to 194 (IEELGSVAIKPAGLTGGKGVKVMGDQLPDTGAAYDYAVSLLDGDNVVVEENLVGEEFT) is an ATP binding site. 3 residues coordinate Mg(2+): Gln274, Glu286, and Asn288. 3 residues coordinate Mn(2+): Gln274, Glu286, and Asn288.

This sequence belongs to the GARS family. The cofactor is Mg(2+). Requires Mn(2+) as cofactor.

It carries out the reaction 5-phospho-beta-D-ribosylamine + glycine + ATP = N(1)-(5-phospho-beta-D-ribosyl)glycinamide + ADP + phosphate + H(+). The protein operates within purine metabolism; IMP biosynthesis via de novo pathway; N(1)-(5-phospho-D-ribosyl)glycinamide from 5-phospho-alpha-D-ribose 1-diphosphate: step 2/2. The protein is Phosphoribosylamine--glycine ligase of Methanococcoides burtonii (strain DSM 6242 / NBRC 107633 / OCM 468 / ACE-M).